The chain runs to 37 residues: Cytochrome b6-f complex subunit 5 (37 aa).

The helical transmembrane segment at 5–25 (LLSGIVLGMIPVTLAGLFVTA) threads the bilayer.

It belongs to the PetG family. As to quaternary structure, the 4 large subunits of the cytochrome b6-f complex are cytochrome b6, subunit IV (17 kDa polypeptide, PetD), cytochrome f and the Rieske protein, while the 4 small subunits are PetG, PetL, PetM and PetN. The complex functions as a dimer.

It localises to the plastid. The protein localises to the chloroplast thylakoid membrane. In terms of biological role, component of the cytochrome b6-f complex, which mediates electron transfer between photosystem II (PSII) and photosystem I (PSI), cyclic electron flow around PSI, and state transitions. PetG is required for either the stability or assembly of the cytochrome b6-f complex. This chain is Cytochrome b6-f complex subunit 5, found in Staurastrum punctulatum (Green alga).